A 117-amino-acid chain; its full sequence is MTSNPSSSADQPLSGTTVPGSVPGKAPEEPPVKFTRAAAVWSALIVGFLILILLLIFIAQNTASAQFAFFGWRWSLPLGVAILLAAVGGGLITVFAGTARILQLRRAAKKTHAAALR.

Polar residues predominate over residues 1 to 19; sequence MTSNPSSSADQPLSGTTVP. The tract at residues 1–28 is disordered; that stretch reads MTSNPSSSADQPLSGTTVPGSVPGKAPE. 2 helical membrane-spanning segments follow: residues 38 to 58 and 76 to 96; these read AAVW…LIFI and LPLG…TVFA.

The protein localises to the cell membrane. This is an uncharacterized protein from Mycobacterium tuberculosis (strain ATCC 25618 / H37Rv).